Here is a 391-residue protein sequence, read N- to C-terminus: Chorismate synthase (391 aa).

Arginine 48 contributes to the NADP(+) binding site. FMN is bound by residues 126–128 (RAS), glycine 286, 301–305 (KPTSS), and arginine 328.

This sequence belongs to the chorismate synthase family. Requires FMNH2 as cofactor.

It carries out the reaction 5-O-(1-carboxyvinyl)-3-phosphoshikimate = chorismate + phosphate. It functions in the pathway metabolic intermediate biosynthesis; chorismate biosynthesis; chorismate from D-erythrose 4-phosphate and phosphoenolpyruvate: step 7/7. Functionally, catalyzes the anti-1,4-elimination of the C-3 phosphate and the C-6 proR hydrogen from 5-enolpyruvylshikimate-3-phosphate (EPSP) to yield chorismate, which is the branch point compound that serves as the starting substrate for the three terminal pathways of aromatic amino acid biosynthesis. This reaction introduces a second double bond into the aromatic ring system. In Saccharolobus islandicus (strain Y.N.15.51 / Yellowstone #2) (Sulfolobus islandicus), this protein is Chorismate synthase.